Reading from the N-terminus, the 182-residue chain is tRNA-splicing endonuclease (182 aa).

Active-site residues include Y119, H127, and K158.

The protein belongs to the tRNA-intron endonuclease family. Archaeal short subfamily. As to quaternary structure, homotetramer; although the tetramer contains four active sites, only two participate in the cleavage. Therefore, it should be considered as a dimer of dimers.

The catalysed reaction is pretRNA = a 3'-half-tRNA molecule with a 5'-OH end + a 5'-half-tRNA molecule with a 2',3'-cyclic phosphate end + an intron with a 2',3'-cyclic phosphate and a 5'-hydroxyl terminus.. In terms of biological role, endonuclease that removes tRNA introns. Cleaves pre-tRNA at the 5'- and 3'-splice sites to release the intron. The products are an intron and two tRNA half-molecules bearing 2',3' cyclic phosphate and 5'-OH termini. Recognizes a pseudosymmetric substrate in which 2 bulged loops of 3 bases are separated by a stem of 4 bp. The sequence is that of tRNA-splicing endonuclease from Saccharolobus islandicus (strain M.16.27) (Sulfolobus islandicus).